We begin with the raw amino-acid sequence, 465 residues long: Cysteine--tRNA ligase (465 aa).

Residue Cys-30 participates in Zn(2+) binding. The 'HIGH' region signature appears at 32–42; sequence ITVYDYCHVGH. Cys-214, His-239, and Glu-243 together coordinate Zn(2+). A 'KMSKS' region motif is present at residues 271-275; that stretch reads KMSKS. Lys-274 is an ATP binding site.

The protein belongs to the class-I aminoacyl-tRNA synthetase family. In terms of assembly, monomer. Requires Zn(2+) as cofactor.

It is found in the cytoplasm. It carries out the reaction tRNA(Cys) + L-cysteine + ATP = L-cysteinyl-tRNA(Cys) + AMP + diphosphate. The chain is Cysteine--tRNA ligase from Burkholderia orbicola (strain MC0-3).